Reading from the N-terminus, the 263-residue chain is Pyruvate formate-lyase-activating enzyme (263 aa).

A Radical SAM core domain is found at 23–260 (VDGPGIRFVV…TETYEEYKKR (238 aa)). [4Fe-4S] cluster contacts are provided by Cys37, Cys41, and Cys44. S-adenosyl-L-methionine contacts are provided by residues 43 to 45 (YCH), Gly87, 142 to 144 (DIK), and His215.

The protein belongs to the organic radical-activating enzymes family. [4Fe-4S] cluster is required as a cofactor.

It localises to the cytoplasm. It catalyses the reaction glycyl-[formate C-acetyltransferase] + reduced [flavodoxin] + S-adenosyl-L-methionine = glycin-2-yl radical-[formate C-acetyltransferase] + semiquinone [flavodoxin] + 5'-deoxyadenosine + L-methionine + H(+). Activation of pyruvate formate-lyase under anaerobic conditions by generation of an organic free radical, using S-adenosylmethionine and reduced flavodoxin as cosubstrates to produce 5'-deoxy-adenosine. The chain is Pyruvate formate-lyase-activating enzyme (act) from Streptococcus mutans serotype c (strain ATCC 700610 / UA159).